Here is a 147-residue protein sequence, read N- to C-terminus: UPF0178 protein IL2341 (147 aa).

The protein belongs to the UPF0178 family.

The protein is UPF0178 protein IL2341 of Idiomarina loihiensis (strain ATCC BAA-735 / DSM 15497 / L2-TR).